The primary structure comprises 64 residues: Large ribosomal subunit protein bL35 (64 aa).

Belongs to the bacterial ribosomal protein bL35 family.

In Vibrio metschnikovii, this protein is Large ribosomal subunit protein bL35.